The sequence spans 205 residues: Mitotic spindle assembly checkpoint protein MAD2A (205 aa).

The residue at position 2 (Ala-2) is an N-acetylalanine. Positions 14–197 (RGSAEIVAEF…TTIHKVNSMV (184 aa)) constitute an HORMA domain. Phosphoserine is present on residues Ser-130, Ser-170, Ser-185, and Ser-195. Residues 195-205 (SMVAYKTPVND) are required for assuming the closed conformation and for interaction with CDC20.

The protein belongs to the MAD2 family. As to quaternary structure, monomer and homodimer. Heterodimerizes with MAD2L1 in order to form a tetrameric MAD1L1-MAD2L1 core complex. In the closed and open conformation, interacts with MAD1L1. Formation of a heterotetrameric core complex containing two molecules each of MAD1L1 and of MAD2L1 promotes binding of another molecule of MAD2L1 to each MAD2L1, resulting in a heterohexamer. Interacts with MAD2L1BP. Interacts with ADAM17/TACE. Interacts with CDC20. Dimeric MAD2L1 in the closed conformation interacts with CDC20. Monomeric MAD2L1 in the open conformation does not interact with CDC20. CDC20 competes with MAD1L1 for MAD2L1 binding. In the closed conformation, interacts with BUB1B. Interacts with TTK. Interacts with TPR. Binds to UBD (via ubiquitin-like 1 domain) during mitosis. Interacts with isoform 1 and isoform 2 of NEK2. Interacts with HSF1; this interaction occurs in mitosis. In terms of processing, phosphorylated on multiple serine residues. The level of phosphorylation varies during the cell cycle and is highest during mitosis. Phosphorylation abolishes interaction with MAD1L1 and reduces interaction with CDC20. Phosphorylated by NEK2.

Its subcellular location is the nucleus. It localises to the chromosome. It is found in the centromere. The protein resides in the kinetochore. The protein localises to the cytoplasm. Its subcellular location is the cytoskeleton. It localises to the spindle pole. In terms of biological role, component of the spindle-assembly checkpoint that prevents the onset of anaphase until all chromosomes are properly aligned at the metaphase plate. In the closed conformation (C-MAD2) forms a heterotetrameric complex with MAD1L1 at unattached kinetochores during prometaphase, and recruits an open conformation of MAD2L1 (O-MAD2) which then promotes the conversion of O-MAD2 to C-MAD2. Required for the execution of the mitotic checkpoint which monitors the process of kinetochore-spindle attachment and inhibits the activity of the anaphase promoting complex by sequestering CDC20 until all chromosomes are aligned at the metaphase plate. The protein is Mitotic spindle assembly checkpoint protein MAD2A (Mad2l1) of Mus musculus (Mouse).